A 278-amino-acid polypeptide reads, in one-letter code: Probable endonuclease 4 (278 aa).

H66, H106, E142, D176, H179, H213, D226, H228, and E258 together coordinate Zn(2+).

It belongs to the AP endonuclease 2 family. Requires Zn(2+) as cofactor.

It catalyses the reaction Endonucleolytic cleavage to 5'-phosphooligonucleotide end-products.. In terms of biological role, endonuclease IV plays a role in DNA repair. It cleaves phosphodiester bonds at apurinic or apyrimidinic (AP) sites, generating a 3'-hydroxyl group and a 5'-terminal sugar phosphate. The chain is Probable endonuclease 4 from Halothermothrix orenii (strain H 168 / OCM 544 / DSM 9562).